The primary structure comprises 163 residues: Nucleotide-binding protein YajQ (163 aa).

The protein belongs to the YajQ family.

Nucleotide-binding protein. The chain is Nucleotide-binding protein YajQ from Shigella dysenteriae serotype 1 (strain Sd197).